The following is a 346-amino-acid chain: Cyclin-dependent kinase 20 (346 aa).

Residues 4–288 (YCILGRIGEG…ASKALLHQYF (285 aa)) form the Protein kinase domain. Residues 10-18 (IGEGAHGIV) and K33 each bind ATP. The Proton acceptor role is filled by D127.

The protein belongs to the protein kinase superfamily. CMGC Ser/Thr protein kinase family. CDC2/CDKX subfamily. Monomer. Interacts with TBC1D32 and MAK.

It localises to the nucleus. The protein resides in the cytoplasm. It is found in the cell projection. Its subcellular location is the cilium. It carries out the reaction L-seryl-[protein] + ATP = O-phospho-L-seryl-[protein] + ADP + H(+). The enzyme catalyses L-threonyl-[protein] + ATP = O-phospho-L-threonyl-[protein] + ADP + H(+). Its function is as follows. Required for high-level Shh responses in the developing neural tube. Together with TBC1D32, controls the structure of the primary cilium by coordinating assembly of the ciliary membrane and axoneme, allowing GLI2 to be properly activated in response to SHH signaling. Involved in cell growth. Activates CDK2, a kinase involved in the control of the cell cycle, by phosphorylating residue 'Thr-160'. In Pongo abelii (Sumatran orangutan), this protein is Cyclin-dependent kinase 20 (CDK20).